The sequence spans 397 residues: Decapping and exoribonuclease protein (397 aa).

Basic and acidic residues predominate over residues 1-20 (MESRGTKREAGKIEVAEPRN). The tract at residues 1-37 (MESRGTKREAGKIEVAEPRNKLPRPAPSLPTDPALYS) is disordered. R58 lines the substrate pocket. Residues 67 to 88 (LRYYSPPPTNGQSPNFDLRDGY) form a disordered region. Substrate contacts are provided by residues E101 and 131–133 (WRG). Residue E192 participates in Mg(2+) binding. C217 and E234 together coordinate substrate. Mg(2+)-binding residues include E234, D236, E253, and L254. The substrate site is built by K255 and Q280. A Phosphothreonine modification is found at T392. A Phosphoserine modification is found at S394.

It belongs to the DXO/Dom3Z family. The cofactor is Mg(2+).

The protein resides in the nucleus. The enzyme catalyses a 5'-end triphospho-ribonucleoside in mRNA + H2O = a 5'-end phospho-ribonucleoside in mRNA + diphosphate + H(+). It carries out the reaction a 5'-end NAD(+)-phospho-ribonucleoside in mRNA + H2O = a 5'-end phospho-ribonucleoside in mRNA + NAD(+) + H(+). The catalysed reaction is a 5'-end NAD(+)-phospho-ribonucleoside in snoRNA + H2O = a 5'-end phospho-ribonucleoside in snoRNA + NAD(+) + H(+). It catalyses the reaction a 5'-end (N(7)-methyl 5'-triphosphoguanosine)-ribonucleoside-ribonucleotide in mRNA + H2O = a (N(7)-methyl 5'-triphosphoguanosine)-nucleoside + a 5'-end phospho-ribonucleoside in mRNA + H(+). The enzyme catalyses a 5'-end FAD-phospho-ribonucleoside in mRNA + H2O = a 5'-end phospho-ribonucleoside in mRNA + FAD + H(+). It carries out the reaction a 5'-end CoA-ribonucleoside in mRNA + H2O = 3'-dephospho-CoA + a 5'-end phospho-ribonucleoside in mRNA + H(+). Decapping enzyme for NAD-capped RNAs: specifically hydrolyzes the nicotinamide adenine dinucleotide (NAD) cap from a subset of RNAs by removing the entire NAD moiety from the 5'-end of an NAD-capped RNA. The NAD-cap is present at the 5'-end of some RNAs and snoRNAs. In contrast to the canonical 5'-end N7 methylguanosine (m7G) cap, the NAD cap promotes mRNA decay. Preferentially acts on NAD-capped transcripts in response to environmental stress. Also acts as a non-canonical decapping enzyme that removes the entire cap structure of m7G capped or incompletely capped RNAs and mediates their subsequent degradation. Specifically degrades pre-mRNAs with a defective 5'-end m7G cap and is part of a pre-mRNA capping quality control. Has decapping activity toward incomplete 5'-end m7G cap mRNAs such as unmethylated 5'-end-capped RNA (cap0), while it has no activity toward 2'-O-ribose methylated m7G cap (cap1). In contrast to canonical decapping enzymes DCP2 and NUDT16, which cleave the cap within the triphosphate linkage, the decapping activity releases the entire cap structure GpppN and a 5'-end monophosphate RNA. Also has 5'-3' exoribonuclease activities: The 5'-end monophosphate RNA is then degraded by the 5'-3' exoribonuclease activity, enabling this enzyme to decap and degrade incompletely capped mRNAs. Also possesses RNA 5'-pyrophosphohydrolase activity by hydrolyzing the 5'-end triphosphate to release pyrophosphates. Exhibits decapping activity towards FAD-capped RNAs. Exhibits decapping activity towards dpCoA-capped RNAs in vitro. The protein is Decapping and exoribonuclease protein of Bos taurus (Bovine).